Here is a 708-residue protein sequence, read N- to C-terminus: Leukotoxin translocation ATP-binding protein LktB (708 aa).

Residues 1-126 form the Peptidase C39 domain; that stretch reads MEANHQRNDL…ACYQGQLILV (126 aa). An ABC transmembrane type-1 domain is found at 155 to 437; the sequence is FLETLIVSIF…LAQLWQDFQQ (283 aa). 5 helical membrane-spanning segments follow: residues 159–179, 192–212, 270–290, 296–316, and 389–409; these read LIVSIFLQIFALITPLFFQVV, LNIITVALAIVIIFEIVLSGL, ALTSVLDLLFSFIFFAVMWYY, LVILGSLPCYILWSIFISPIL, and VMVINLWLGAHLVISGDLSIG. The ABC transporter domain occupies 469 to 704; it reads ISFKNIRFRY…SNGLYSYLHQ (236 aa). ATP is bound at residue 503–510; it reads GRSGSGKS.

Belongs to the ABC transporter superfamily. Protein-1 exporter (TC 3.A.1.109) family. Homodimer.

The protein resides in the cell inner membrane. It catalyses the reaction ATP + H2O + proteinSide 1 = ADP + phosphate + proteinSide 2.. Part of the ABC transporter complex LktBD involved in leukotoxin export. Transmembrane domains (TMD) form a pore in the inner membrane and the ATP-binding domain (NBD) is responsible for energy generation. This Mannheimia haemolytica (Pasteurella haemolytica) protein is Leukotoxin translocation ATP-binding protein LktB (lktB).